Reading from the N-terminus, the 606-residue chain is MACPF domain-containing protein At4g24290 (606 aa).

The MACPF domain occupies 1–332 (MALRLPASKA…PPIEELHQFL (332 aa)).

The protein belongs to the complement C6/C7/C8/C9 (TC 1.C.39) family.

Functionally, negatively controls the salicylic acid (SA)-mediated pathway of programmed cell death in plant immunity. The sequence is that of MACPF domain-containing protein At4g24290 from Arabidopsis thaliana (Mouse-ear cress).